The primary structure comprises 179 residues: Calcineurin subunit B type 2 (179 aa).

Residue G2 is the site of N-myristoyl glycine attachment. EF-hand domains are found at residues 18 to 53 (EEIRRLGKSFRKLDLDKSGSLSIEEFMRLPELQQNP), 57 to 85 (RVIDIFDTDGNGEVDFHEFIVGTSQFSVK), 87 to 122 (DEEQKLRFAFRIYDMDNDGFISNGELFQVLKMMVGN), and 128 to 163 (QLQQLVDKSILVLDKDGDGRISFEEFSDVVKTMEIH). D31, D33, S35, S37, E42, D63, D65, N67, E69, E74, D100, D102, D104, and E111 together coordinate Ca(2+). Residues 131-136 (QLVDKS) form a calcineurin A binding region. Residues D141, D143, D145, R147, and E152 each coordinate Ca(2+).

This sequence belongs to the calcineurin regulatory subunit family. As to quaternary structure, forms a complex composed of a calmodulin-dependent catalytic subunit (also known as calcineurin A) and a regulatory Ca(2+)-binding subunit (also known as calcineurin B). There are three catalytic subunits, each encoded by a separate gene (PPP3CA, PPP3CB, and PPP3CC) and two regulatory subunits which are also encoded by separate genes (PPP3R1 and PPP3R2). Interacts with SPATA33 (via PQIIIT motif). Expressed in osteoblasts and bone marrow (at protein level). Expressed in the testis. Expressed in the sperm midpiece in a SPATA33-dependent manner (at protein level).

The protein localises to the mitochondrion. Its function is as follows. Regulatory subunit of calcineurin, a calcium-dependent, calmodulin stimulated protein phosphatase. Confers calcium sensitivity. This is Calcineurin subunit B type 2 (Ppp3r2) from Mus musculus (Mouse).